Reading from the N-terminus, the 942-residue chain is Isoleucine--tRNA ligase (942 aa).

Positions 58–68 match the 'HIGH' region motif; that stretch reads PYANGDIHIGH. Glu566 serves as a coordination point for L-isoleucyl-5'-AMP. The short motif at 607 to 611 is the 'KMSKS' region element; it reads KMSKS. Position 610 (Lys610) interacts with ATP. Residues Cys905, Cys908, Cys925, and Cys928 each contribute to the Zn(2+) site.

The protein belongs to the class-I aminoacyl-tRNA synthetase family. IleS type 1 subfamily. Monomer. The cofactor is Zn(2+).

Its subcellular location is the cytoplasm. It carries out the reaction tRNA(Ile) + L-isoleucine + ATP = L-isoleucyl-tRNA(Ile) + AMP + diphosphate. In terms of biological role, catalyzes the attachment of isoleucine to tRNA(Ile). As IleRS can inadvertently accommodate and process structurally similar amino acids such as valine, to avoid such errors it has two additional distinct tRNA(Ile)-dependent editing activities. One activity is designated as 'pretransfer' editing and involves the hydrolysis of activated Val-AMP. The other activity is designated 'posttransfer' editing and involves deacylation of mischarged Val-tRNA(Ile). This chain is Isoleucine--tRNA ligase, found in Vibrio campbellii (strain ATCC BAA-1116).